The primary structure comprises 156 residues: Glutaredoxin-2, mitochondrial (156 aa).

The N-terminal 19 residues, 1 to 19 (MSWRRAASVGRRLVASGRI), are a transit peptide targeting the mitochondrion. Residues 50–150 (VNQIQETISN…PLVHQCYLKK (101 aa)) enclose the Glutaredoxin domain. A [2Fe-2S] cluster-binding site is contributed by cysteine 61. Lysine 67 contacts glutathione. Position 70 is an S-glutathionyl cysteine; alternate (cysteine 70). A disulfide bond links cysteine 70 and cysteine 73. Residues glutamine 102 and valine 114 each coordinate glutathione. Cysteine 146 is a binding site for [2Fe-2S] cluster.

The protein belongs to the glutaredoxin family. In terms of assembly, monomer; active form. Homodimer; inactive form. The homodimer is probably linked by 1 2Fe-2S cluster. As to expression, widely expressed. Highly expressed in testis, and at much lower level in kidney and brain.

The protein resides in the mitochondrion. Its subcellular location is the nucleus. With respect to regulation, the 2Fe-2S present in the homodimer leads to inactivation of the enzyme. The 2Fe-2S may serve as a redox sensor: the presence of one-electron oxidants or reductants leading to the loss of the 2Fe-2S cluster, subsequent monomerization and activation of the enzyme. Glutathione-dependent oxidoreductase that facilitates the maintenance of mitochondrial redox homeostasis upon induction of apoptosis by oxidative stress. Involved in response to hydrogen peroxide and regulation of apoptosis caused by oxidative stress. Acts as a very efficient catalyst of monothiol reactions because of its high affinity for protein glutathione-mixed disulfides. Can receive electrons not only from glutathione (GSH), but also from thioredoxin reductase supporting both monothiol and dithiol reactions. Efficiently catalyzes both glutathionylation and deglutathionylation of mitochondrial complex I, which in turn regulates the superoxide production by the complex. Overexpression decreases the susceptibility to apoptosis and prevents loss of cardiolipin and cytochrome c release. In Mus musculus (Mouse), this protein is Glutaredoxin-2, mitochondrial (Glrx2).